A 178-amino-acid chain; its full sequence is MSEKAIAVKAQKVEEIADQFKAAASAVVVDPRGLTVAQSTELRHQLREEGVVLEVIKNKVLTRAAEKAGYAELNDIFAGPSAVAFSNDDAVAPARILKKFADENEALEIKGGVVDGTIANIDDINKYASLPSREGLLGQLMAEFQFSIRSFAYAVKAVQDKLEEESAAPAAEASTDAE.

This sequence belongs to the universal ribosomal protein uL10 family. Part of the ribosomal stalk of the 50S ribosomal subunit. The N-terminus interacts with L11 and the large rRNA to form the base of the stalk. The C-terminus forms an elongated spine to which L12 dimers bind in a sequential fashion forming a multimeric L10(L12)X complex.

Its function is as follows. Forms part of the ribosomal stalk, playing a central role in the interaction of the ribosome with GTP-bound translation factors. This Leuconostoc mesenteroides subsp. mesenteroides (strain ATCC 8293 / DSM 20343 / BCRC 11652 / CCM 1803 / JCM 6124 / NCDO 523 / NBRC 100496 / NCIMB 8023 / NCTC 12954 / NRRL B-1118 / 37Y) protein is Large ribosomal subunit protein uL10.